The chain runs to 34 residues: Photosystem I reaction center subunit XII (34 aa).

Residues 11 to 31 (VAIAFVVALIAGIAALLLSTA) form a helical membrane-spanning segment.

It belongs to the PsaM family. As to quaternary structure, the G.violaceus PSI reaction center is composed of one copy each of PsaA,B,C,D,E,F,L,M and Z, and forms trimeric complexes.

The protein resides in the cell inner membrane. This chain is Photosystem I reaction center subunit XII, found in Gloeobacter violaceus (strain ATCC 29082 / PCC 7421).